The sequence spans 468 residues: UDP-N-acetylmuramate--L-alanine ligase (468 aa).

114–120 (GTHGKTT) provides a ligand contact to ATP.

Belongs to the MurCDEF family.

It is found in the cytoplasm. It carries out the reaction UDP-N-acetyl-alpha-D-muramate + L-alanine + ATP = UDP-N-acetyl-alpha-D-muramoyl-L-alanine + ADP + phosphate + H(+). It functions in the pathway cell wall biogenesis; peptidoglycan biosynthesis. Cell wall formation. The chain is UDP-N-acetylmuramate--L-alanine ligase from Methylorubrum extorquens (strain PA1) (Methylobacterium extorquens).